The chain runs to 108 residues: UPF0145 protein LACR_1006 (108 aa).

The protein belongs to the UPF0145 family.

In Lactococcus lactis subsp. cremoris (strain SK11), this protein is UPF0145 protein LACR_1006.